The sequence spans 435 residues: Methionine aminopeptidase 2 (435 aa).

Positions 1–87 (MAAQVADGVA…TQTKPPRVPV (87 aa)) are disordered. A compositionally biased stretch (basic and acidic residues) spans 10 to 19 (ADLKLDDTKS). Positions 20 to 29 (KPTNGTTQNG) are enriched in polar residues. A compositionally biased stretch (acidic residues) spans 32–46 (EHEDSDDDNEGEEGA). Over residues 55-68 (KKKKKRKPRKKKKA) the composition is skewed to basic residues. His199 contributes to the substrate binding site. Positions 219, 230, and 299 each coordinate a divalent metal cation. His307 lines the substrate pocket. The a divalent metal cation site is built by Glu332 and Glu427.

This sequence belongs to the peptidase M24A family. Methionine aminopeptidase eukaryotic type 2 subfamily. Co(2+) is required as a cofactor. It depends on Zn(2+) as a cofactor. The cofactor is Mn(2+). Requires Fe(2+) as cofactor.

The protein resides in the cytoplasm. The catalysed reaction is Release of N-terminal amino acids, preferentially methionine, from peptides and arylamides.. In terms of biological role, cotranslationally removes the N-terminal methionine from nascent proteins. The N-terminal methionine is often cleaved when the second residue in the primary sequence is small and uncharged (Met-Ala-, Cys, Gly, Pro, Ser, Thr, or Val). This is Methionine aminopeptidase 2 from Phaeosphaeria nodorum (strain SN15 / ATCC MYA-4574 / FGSC 10173) (Glume blotch fungus).